The chain runs to 417 residues: MVLLKKGFAILAASFLAIGLAACSSSKNPASSDGKKVLTVSVEETYKEYIESIKTKFEKENDVTVKIVEKQMFEQLEALPLDGPAGNAPDVMLAAYDRIGGLGQQGHLLDIKPSNTKSFGDKEMQQVTVDGKVYGMPLVIETLILYYNKDLLKTAPKTFKDLEKLTEDPRFAFASEKGKSTGFLAKWTDFYMSYGLLAGYGGYVFGKNGTDSGDIGLNNKGAVEAVKYAEKWFETYWPKGMQDNSSADDFIQQMFLEGKAAAIIGGPWSAANYKEAKLNYGAAPIPTLPNGEEYAPFAGGKGWVASKYTKEPELAEKWLEYAANDANAYAFYEDTNEVPANTAARKKADEQKNELTSAVIKQYETATPTPNIPEMAEVWTGAESLIFDAASGKKSTQTSANDAVNVIKENIKEKYVK.

The N-terminal stretch at 1–22 (MVLLKKGFAILAASFLAIGLAA) is a signal peptide. The N-palmitoyl cysteine moiety is linked to residue Cys23. The S-diacylglycerol cysteine moiety is linked to residue Cys23.

The protein belongs to the bacterial solute-binding protein 1 family. As to quaternary structure, the complex is composed of two ATP-binding proteins (MsmX), two transmembrane proteins (MdxF and MdxG) and a solute-binding protein (MdxE).

Its subcellular location is the cell membrane. Its activity is regulated as follows. Inhibited by glucose and lactose. Its function is as follows. Part of the ABC transporter complex involved in maltodextrin import. Binds maltodextrin. Can also bind maltose with low affinity, but is not involved in its uptake. This is Maltodextrin-binding protein MdxE (mdxE) from Bacillus subtilis (strain 168).